The sequence spans 104 residues: Phosphoribosyl-ATP pyrophosphatase (104 aa).

Belongs to the PRA-PH family.

The protein localises to the cytoplasm. The catalysed reaction is 1-(5-phospho-beta-D-ribosyl)-ATP + H2O = 1-(5-phospho-beta-D-ribosyl)-5'-AMP + diphosphate + H(+). It participates in amino-acid biosynthesis; L-histidine biosynthesis; L-histidine from 5-phospho-alpha-D-ribose 1-diphosphate: step 2/9. This chain is Phosphoribosyl-ATP pyrophosphatase, found in Methanosarcina barkeri (strain Fusaro / DSM 804).